Reading from the N-terminus, the 168-residue chain is RNA annealing protein YRA2 (168 aa).

The RRM domain occupies 40-114; sequence FRLKITNIGL…KSIQVTLLDQ (75 aa). Residues 113–152 form a disordered region; that stretch reads DQQKRKRDADQERRKLRHGPRGGYGSHYTKSQKPIEQRNK.

This sequence belongs to the YRA1 family. As to quaternary structure, associates with mRNPs.

The protein resides in the nucleus. Its function is as follows. Involved in export of poly(A) mRNAs from the nucleus. Recruited to the coding sequences as well as poly-A sites of active genes. The sequence is that of RNA annealing protein YRA2 (YRA2) from Candida glabrata (strain ATCC 2001 / BCRC 20586 / JCM 3761 / NBRC 0622 / NRRL Y-65 / CBS 138) (Yeast).